Reading from the N-terminus, the 285-residue chain is Acetylglutamate kinase (285 aa).

Residues 64 to 65, arginine 86, and asparagine 180 each bind substrate; that span reads GG.

This sequence belongs to the acetylglutamate kinase family. ArgB subfamily.

It is found in the plastid. The protein localises to the chloroplast. The catalysed reaction is N-acetyl-L-glutamate + ATP = N-acetyl-L-glutamyl 5-phosphate + ADP. It functions in the pathway amino-acid biosynthesis; L-arginine biosynthesis; N(2)-acetyl-L-ornithine from L-glutamate: step 2/4. Its function is as follows. Catalyzes the ATP-dependent phosphorylation of N-acetyl-L-glutamate. The polypeptide is Acetylglutamate kinase (Gracilaria tenuistipitata var. liui (Red alga)).